A 122-amino-acid polypeptide reads, in one-letter code: UPF0102 protein CLH_1204 (122 aa).

This sequence belongs to the UPF0102 family.

The chain is UPF0102 protein CLH_1204 from Clostridium botulinum (strain Alaska E43 / Type E3).